The following is a 270-amino-acid chain: GTP cyclohydrolase FolE2 2 (270 aa).

Belongs to the GTP cyclohydrolase IV family.

It carries out the reaction GTP + H2O = 7,8-dihydroneopterin 3'-triphosphate + formate + H(+). The protein operates within cofactor biosynthesis; 7,8-dihydroneopterin triphosphate biosynthesis; 7,8-dihydroneopterin triphosphate from GTP: step 1/1. Its function is as follows. Converts GTP to 7,8-dihydroneopterin triphosphate. The sequence is that of GTP cyclohydrolase FolE2 2 from Dechloromonas aromatica (strain RCB).